Consider the following 698-residue polypeptide: Elongation factor G 1 (698 aa).

Residues 8–290 form the tr-type G domain; that stretch reads ERYRNIGICA…AVIEFLPSPT (283 aa). GTP is bound by residues 17 to 24, 88 to 92, and 142 to 145; these read AHVDAGKT, DTPGH, and NKMD.

Belongs to the TRAFAC class translation factor GTPase superfamily. Classic translation factor GTPase family. EF-G/EF-2 subfamily.

Its subcellular location is the cytoplasm. In terms of biological role, catalyzes the GTP-dependent ribosomal translocation step during translation elongation. During this step, the ribosome changes from the pre-translocational (PRE) to the post-translocational (POST) state as the newly formed A-site-bound peptidyl-tRNA and P-site-bound deacylated tRNA move to the P and E sites, respectively. Catalyzes the coordinated movement of the two tRNA molecules, the mRNA and conformational changes in the ribosome. The sequence is that of Elongation factor G 1 from Vibrio cholerae serotype O1 (strain ATCC 39315 / El Tor Inaba N16961).